The sequence spans 382 residues: Elloramycin glycosyltransferase ElmGT (382 aa).

It belongs to the glycosyltransferase 28 family.

It catalyses the reaction 8-demethyltetracenomycin C + dTDP-beta-L-rhamnose = 8-demethyl-8-alpha-L-rhamnosyl-tetracenomycin C + dTDP + H(+). Its pathway is antibiotic biosynthesis. Glycosyltransferase that transfers an L-rhamnose moiety from dTDP-L-rhamnose to the elloramycin aglycone 8-demethyl-tetracenomycin C (8DMTC) in elloramycin biosynthesis, an antitumor polyketide. Possesses donor substrate flexibility: able to transfer at least 11 different sugars to 8DMTC, such as NDP-D-glucose, as well as NDP-L-digitoxose, including both L- and D-isomeric forms of some sugars. In Streptomyces olivaceus, this protein is Elloramycin glycosyltransferase ElmGT.